Here is a 203-residue protein sequence, read N- to C-terminus: Thymidylate kinase (203 aa).

7–14 is an ATP binding site; sequence GPDGSGKS.

Belongs to the thymidylate kinase family.

It catalyses the reaction dTMP + ATP = dTDP + ADP. In terms of biological role, phosphorylation of dTMP to form dTDP in both de novo and salvage pathways of dTTP synthesis. The chain is Thymidylate kinase from Finegoldia magna (strain ATCC 29328 / DSM 20472 / WAL 2508) (Peptostreptococcus magnus).